A 286-amino-acid polypeptide reads, in one-letter code: Beta-glucanase (286 aa).

An N-terminal signal peptide occupies residues 1-30 (MCTMPLMKLKKMMRRTAFLLSVLIGCSMLG). Residues 48–286 (FDYSGLPDPE…DYVRVYRWVE (239 aa)) form the GH16 domain. The active-site Nucleophile is the E158. Residue E163 is the Proton donor of the active site.

It belongs to the glycosyl hydrolase 16 family.

It carries out the reaction Hydrolysis of (1-&gt;4)-beta-D-glucosidic linkages in beta-D-glucans containing (1-&gt;3)- and (1-&gt;4)-bonds.. Its function is as follows. Shows activity on lichenan, beta-glucan and laminarin but not on CMC cellulose or xylan. In Rhodothermus marinus (Rhodothermus obamensis), this protein is Beta-glucanase (bglA).